A 228-amino-acid chain; its full sequence is Archaeal flagellar ATP-binding protein FlaH (228 aa).

Residues Gly30, Thr31, Lys33, Ser34, Val35, Glu57, and Lys191 each coordinate ATP. Ser34 lines the Mg(2+) pocket. Glu57 serves as a coordination point for Mg(2+).

Belongs to the FlaH family. In terms of assembly, the S.acidocaldarius archaellum assembly machinery and its filament consist of seven proteins (FlaB, FlaF, FlaG, FlaH, FlaI, FlaJ and FlaX). Interacts directly with the FlaX ring and the motor ATPase FlaI. Monomers, which can probably form homohexamers upon binding to ATP. In vitro, FlaH assembles as a second ring inside the FlaX ring.

Its subcellular location is the archaeal flagellum. The protein resides in the cytoplasm. Its function is as follows. Component of the archaellum. FlaX, FlaH and FlaI form the core cytoplasmic motor complex of the crenarchaeal archaellum. FlaH binds ATP with high affinity but lacks detectable in vitro ATPase activity. ATP binding is essential for interaction with FlaI and for archaellum assembly. The sequence is that of Archaeal flagellar ATP-binding protein FlaH from Sulfolobus acidocaldarius (strain ATCC 33909 / DSM 639 / JCM 8929 / NBRC 15157 / NCIMB 11770).